The chain runs to 502 residues: Hippocampus abundant transcript-like protein 1 (502 aa).

Residues 1-12 are compositionally biased toward basic and acidic residues; it reads MNAEPPEEKAAS. Residues 1 to 27 are disordered; the sequence is MNAEPPEEKAASEAEAGAMPEKRAGSR. Residues 1 to 46 are Extracellular-facing; sequence MNAEPPEEKAASEAEAGAMPEKRAGSRAAGGNSLQGFGRPSVYHAA. Residues 47 to 67 form a helical membrane-spanning segment; that stretch reads IVIFLEFFAWGLLTTSMLTVL. The Cytoplasmic segment spans residues 68-79; sequence HETFPQHTFLMN. A helical membrane pass occupies residues 80–100; it reads GLIQGVKGLLSFLSAPLIGAL. Residues 101–108 are Extracellular-facing; sequence SDVWGRKP. Residues 109–129 form a helical membrane-spanning segment; sequence FLLGTVFFTCFPIPLMRISPW. The Cytoplasmic segment spans residues 130 to 131; it reads WY. A helical transmembrane segment spans residues 132 to 152; the sequence is FAMISISGVFSVTFSVIFAYV. The Extracellular portion of the chain corresponds to 153 to 165; that stretch reads ADVTQEHERSTAY. Residues 166–186 traverse the membrane as a helical segment; the sequence is GWVSATFAASLVSSPAIGAYL. Over 187–193 the chain is Cytoplasmic; sequence SASYGDS. The helical transmembrane segment at 194–214 threads the bilayer; sequence LVVLVATVVALLDICFILLAV. Topologically, residues 215-248 are extracellular; it reads PESLPEKMRPLSWGARISWKQADPFASLKKVGKD. Residues 249-269 form a helical membrane-spanning segment; sequence STILLICITVFLSYLPEAGQY. Residues 270-278 are Cytoplasmic-facing; sequence SSFFLYLRQ. A helical transmembrane segment spans residues 279 to 299; that stretch reads VIGFGSIKIAAFIAMVGILSI. Residues 300 to 316 are Extracellular-facing; it reads VAQTVFLTSLMRSLGNK. Residues 317–337 form a helical membrane-spanning segment; it reads NTVLLGLGFQMFQLAWYGFGS. A topological domain (cytoplasmic) is located at residue Gln-338. Residues 339–359 traverse the membrane as a helical segment; sequence AWMMWAAGIVAAVSSITFPAV. The Extracellular segment spans residues 360–384; it reads STLVSQNADSNQQGVAQGIITGIRG. A helical transmembrane segment spans residues 385-405; the sequence is LCNGLGPALYGFIFYMFHVEL. At 406-425 the chain is on the cytoplasmic side; that stretch reads TELEPELISNNAALQGAVIP. Residues 426–446 traverse the membrane as a helical segment; that stretch reads GPPFLFGACIVFMSFLVAVFI. Over 447–502 the chain is Extracellular; it reads PEYSKGGIQKHSNSISGSLANTPERGSDEDIEPLLQDSSIWELSSLEEPGHQCTEL.

It belongs to the major facilitator superfamily.

The protein resides in the membrane. This Bos taurus (Bovine) protein is Hippocampus abundant transcript-like protein 1.